Consider the following 97-residue polypeptide: UPF0235 protein APP7_1431 (97 aa).

This sequence belongs to the UPF0235 family.

The chain is UPF0235 protein APP7_1431 from Actinobacillus pleuropneumoniae serotype 7 (strain AP76).